A 151-amino-acid chain; its full sequence is RNA polymerase-binding transcription factor DksA (151 aa).

Positions 34–54 (EAQLSHFKRILEAWRNQLRDE) form a coiled coil. Residues Cys114, Cys117, Cys135, and Cys138 each coordinate Zn(2+). The segment at 114–138 (CESCGVEIGIRRLEARPTADLCIDC) adopts a dksA C4-type zinc-finger fold.

It belongs to the DksA family. As to quaternary structure, interacts directly with the RNA polymerase.

Its subcellular location is the cytoplasm. In terms of biological role, transcription factor that acts by binding directly to the RNA polymerase (RNAP). Required for negative regulation of rRNA expression and positive regulation of several amino acid biosynthesis promoters. Also required for regulation of fis expression. This Salmonella typhi protein is RNA polymerase-binding transcription factor DksA.